A 522-amino-acid polypeptide reads, in one-letter code: GMP synthase [glutamine-hydrolyzing] (522 aa).

Positions Y5–V204 constitute a Glutamine amidotransferase type-1 domain. C82 serves as the catalytic Nucleophile. Catalysis depends on residues H178 and E180. Residues I205–R397 enclose the GMPS ATP-PPase domain. S232–F238 is a binding site for ATP.

As to quaternary structure, homodimer.

The catalysed reaction is XMP + L-glutamine + ATP + H2O = GMP + L-glutamate + AMP + diphosphate + 2 H(+). It functions in the pathway purine metabolism; GMP biosynthesis; GMP from XMP (L-Gln route): step 1/1. Functionally, catalyzes the synthesis of GMP from XMP. In Wigglesworthia glossinidia brevipalpis, this protein is GMP synthase [glutamine-hydrolyzing].